We begin with the raw amino-acid sequence, 713 residues long: DNA polymerase eta (713 aa).

A UmuC domain is found at Val9 to Gly259. Mg(2+)-binding residues include Asp13 and Met14. Positions 13 and 14 each coordinate Mn(2+). Residue Arg61 participates in a 2'-deoxyribonucleoside 5'-triphosphate binding. Asp115 and Glu116 together coordinate Mg(2+). Mn(2+)-binding residues include Asp115 and Glu116. 2 disordered regions span residues Thr441–Ala472 and Glu495–Gly527. Polar residues-rich tracts occupy residues Val456–Ser466 and Ser497–Gly527. A UBZ3-type zinc finger spans residues Ala628 to Ser662. 4 residues coordinate Zn(2+): Cys635, Cys638, His650, and His654. Residues Val677 to Glu705 are disordered. Residues Lys682, Lys686, and Lys694 each participate in a glycyl lysine isopeptide (Lys-Gly) (interchain with G-Cter in ubiquitin) cross-link. The PIP-box motif lies at Met701–Phe708. Residue Lys709 forms a Glycyl lysine isopeptide (Lys-Gly) (interchain with G-Cter in ubiquitin) linkage.

The protein belongs to the DNA polymerase type-Y family. In terms of assembly, interacts with REV1. Interacts with monoubiquitinated PCNA, but not unmodified PCNA. Interacts with POLI; this interaction targets POLI to the replication machinery. Interacts with PALB2 and BRCA2; the interactions are direct and are required to sustain the recruitment of POLH at blocked replication forks and to stimulate POLH-dependent DNA synthesis on D loop substrates. Interacts (via C-terminus) with TRAIP. Interacts with ubiquitin. Interacts with POLDIP2. Mg(2+) is required as a cofactor. Requires Mn(2+) as cofactor. Monoubiquitinated by RCHY1/PIRH2. Ubiquitination depends on integrity of the UBZ3-type zinc finger domain and is enhanced by TRAIP. Ubiquitination inhibits the ability of PolH to interact with PCNA and to bypass UV-induced lesions.

Its subcellular location is the nucleus. It carries out the reaction DNA(n) + a 2'-deoxyribonucleoside 5'-triphosphate = DNA(n+1) + diphosphate. With respect to regulation, the enzyme in complex with the DNA substrate binds a third divalent metal cation. The binding of this third divalent cation, which is coordinated by water molecules and two oxygen atoms from DNA and dNTP, is essential for catalyzing the DNA synthesis. DNA polymerase specifically involved in the DNA repair by translesion synthesis (TLS). Due to low processivity on both damaged and normal DNA, cooperates with the heterotetrameric (REV3L, REV7, POLD2 and POLD3) POLZ complex for complete bypass of DNA lesions. Inserts one or 2 nucleotide(s) opposite the lesion, the primer is further extended by the tetrameric POLZ complex. In the case of 1,2-intrastrand d(GpG)-cisplatin cross-link, inserts dCTP opposite the 3' guanine. Particularly important for the repair of UV-induced pyrimidine dimers. Although inserts the correct base, may cause base transitions and transversions depending upon the context. May play a role in hypermutation at immunoglobulin genes. Forms a Schiff base with 5'-deoxyribose phosphate at abasic sites, but does not have any lyase activity, preventing the release of the 5'-deoxyribose phosphate (5'-dRP) residue. This covalent trapping of the enzyme by the 5'-dRP residue inhibits its DNA synthetic activity during base excision repair, thereby avoiding high incidence of mutagenesis. Targets POLI to replication foci. The chain is DNA polymerase eta (POLH) from Homo sapiens (Human).